Consider the following 138-residue polypeptide: Large ribosomal subunit protein eL32 (138 aa).

The protein belongs to the eukaryotic ribosomal protein eL32 family.

In Saccharolobus solfataricus (strain ATCC 35092 / DSM 1617 / JCM 11322 / P2) (Sulfolobus solfataricus), this protein is Large ribosomal subunit protein eL32 (rpl32e).